We begin with the raw amino-acid sequence, 189 residues long: dCTP deaminase (189 aa).

DCTP is bound by residues 112–117, 136–138, glutamine 157, tyrosine 171, and glutamine 181; these read KSTYAR and TLE. The active-site Proton donor/acceptor is glutamate 138.

It belongs to the dCTP deaminase family. In terms of assembly, homotrimer.

It carries out the reaction dCTP + H2O + H(+) = dUTP + NH4(+). It functions in the pathway pyrimidine metabolism; dUMP biosynthesis; dUMP from dCTP (dUTP route): step 1/2. Its function is as follows. Catalyzes the deamination of dCTP to dUTP. In Paraburkholderia xenovorans (strain LB400), this protein is dCTP deaminase.